The sequence spans 305 residues: Zinc transporter ZIP9 (305 aa).

A helical membrane pass occupies residues isoleucine 7 to alanine 27. Asparagine 29 is a glycosylation site (N-linked (GlcNAc...) asparagine). The next 5 helical transmembrane spans lie at leucine 35–valine 55, alanine 104–glycine 124, isoleucine 144–alanine 164, leucine 174–phenylalanine 194, and histidine 208–serine 228. Asparagine 239 is a glycosylation site (N-linked (GlcNAc...) asparagine). A run of 2 helical transmembrane segments spans residues glycine 242–proline 262 and leucine 284–histidine 304.

It belongs to the ZIP transporter (TC 2.A.5) family.

It is found in the golgi apparatus. The protein resides in the trans-Golgi network membrane. It localises to the cell membrane. Its subcellular location is the cytoplasm. The protein localises to the perinuclear region. It is found in the mitochondrion. The protein resides in the nucleus. It carries out the reaction Zn(2+)(in) = Zn(2+)(out). Functionally, transports zinc ions across cell and organelle membranes into the cytoplasm and regulates intracellular zinc homeostasis. Participates in the zinc ions efflux out of the secretory compartments. Regulates intracellular zinc level, resulting in the enhancement of AKT1 and MAPK3/MAPK1 (Erk1/2) phosphorylation in response to the BCR activation. Also functions as a membrane androgen receptor that mediates, through a G protein, the non-classical androgen signaling pathway, characterized by the activation of MAPK3/MAPK1 (Erk1/2) and transcription factors CREB1 or ATF1. Moreover, has dual functions as a membrane-bound androgen receptor and as an androgen-dependent zinc transporter both of which are mediated through an inhibitory G protein (Gi) that mediates both MAP kinase and zinc signaling leading to the androgen-dependent apoptotic process. This is Zinc transporter ZIP9 from Gallus gallus (Chicken).